Consider the following 147-residue polypeptide: Orcokinin peptides (147 aa).

Positions 1-27 are cleaved as a signal peptide; the sequence is MPRHSVFALSILALSITATVWIPTVQA. Propeptides lie at residues 28 to 89 and 146 to 147; these read ETNL…ERFG and FG.

This sequence belongs to the orcokinin family.

Its subcellular location is the secreted. In terms of biological role, myotropic peptides. In Apis mellifera (Honeybee), this protein is Orcokinin peptides.